The sequence spans 113 residues: UPF0482 protein YnfB (113 aa).

The N-terminal stretch at 1–28 (MNNTLSKRLCLTAMLTLAAVVYTTSAFA) is a signal peptide.

This sequence belongs to the UPF0482 family.

This is UPF0482 protein YnfB from Salmonella agona (strain SL483).